Reading from the N-terminus, the 269-residue chain is Monofunctional glycosyltransferase (269 aa).

Residues 46–66 (AIITILILLIIFFGVMYFISS) form a helical membrane-spanning segment.

Belongs to the glycosyltransferase 51 family.

The protein localises to the cell membrane. It carries out the reaction [GlcNAc-(1-&gt;4)-Mur2Ac(oyl-L-Ala-gamma-D-Glu-L-Lys-D-Ala-D-Ala)](n)-di-trans,octa-cis-undecaprenyl diphosphate + beta-D-GlcNAc-(1-&gt;4)-Mur2Ac(oyl-L-Ala-gamma-D-Glu-L-Lys-D-Ala-D-Ala)-di-trans,octa-cis-undecaprenyl diphosphate = [GlcNAc-(1-&gt;4)-Mur2Ac(oyl-L-Ala-gamma-D-Glu-L-Lys-D-Ala-D-Ala)](n+1)-di-trans,octa-cis-undecaprenyl diphosphate + di-trans,octa-cis-undecaprenyl diphosphate + H(+). Its pathway is cell wall biogenesis; peptidoglycan biosynthesis. Peptidoglycan polymerase that catalyzes glycan chain elongation using lipid-linked disaccharide-pentapeptide as the substrate. This chain is Monofunctional glycosyltransferase, found in Staphylococcus epidermidis (strain ATCC 35984 / DSM 28319 / BCRC 17069 / CCUG 31568 / BM 3577 / RP62A).